The following is a 316-amino-acid chain: Apolipoprotein E (316 aa).

A signal peptide spans M1 to A18. A run of 8 repeats spans residues V76 to G97, P98 to G119, A120 to G141, Q142 to M163, R164 to E185, R186 to A207, N208 to R229, and G230 to E251. The 8 X 22 AA approximate tandem repeats stretch occupies residues V76–E251. M139 bears the Methionine sulfoxide mark. S143 bears the Phosphoserine mark. The interval H154–R164 is LDL and other lipoprotein receptors binding. L158–R161 contributes to the heparin binding site. Residues T206–M286 are lipid-binding and lipoprotein association. Heparin is bound at residue G225 to L232. A homooligomerization region spans residues Q262–Q316. The tract at residues R274 to M286 is specificity for association with VLDL.

The protein belongs to the apolipoprotein A1/A4/E family. In terms of assembly, homotetramer. May interact with ABCA1; functionally associated with ABCA1 in the biogenesis of HDLs. May interact with APP/A4 amyloid-beta peptide; the interaction is extremely stable in vitro but its physiological significance is unclear. May interact with MAPT. May interact with MAP2. In the cerebrospinal fluid, interacts with secreted SORL1. Interacts with PMEL; this allows the loading of PMEL luminal fragment on ILVs to induce fibril nucleation. Post-translationally, APOE exists as multiple glycosylated and sialylated glycoforms within cells and in plasma. The extent of glycosylation and sialylation are tissue and context specific. Glycated in plasma VLDL. In terms of processing, phosphorylated by FAM20C in the extracellular medium.

It localises to the secreted. The protein resides in the extracellular space. It is found in the extracellular matrix. Its subcellular location is the extracellular vesicle. The protein localises to the endosome. It localises to the multivesicular body. Functionally, APOE is an apolipoprotein, a protein associating with lipid particles, that mainly functions in lipoprotein-mediated lipid transport between organs via the plasma and interstitial fluids. APOE is a core component of plasma lipoproteins and is involved in their production, conversion and clearance. Apolipoproteins are amphipathic molecules that interact both with lipids of the lipoprotein particle core and the aqueous environment of the plasma. As such, APOE associates with chylomicrons, chylomicron remnants, very low density lipoproteins (VLDL) and intermediate density lipoproteins (IDL) but shows a preferential binding to high-density lipoproteins (HDL). It also binds a wide range of cellular receptors including the LDL receptor/LDLR, the LDL receptor-related proteins LRP1, LRP2 and LRP8 and the very low-density lipoprotein receptor/VLDLR that mediate the cellular uptake of the APOE-containing lipoprotein particles. Finally, APOE also has a heparin-binding activity and binds heparan-sulfate proteoglycans on the surface of cells, a property that supports the capture and the receptor-mediated uptake of APOE-containing lipoproteins by cells. A main function of APOE is to mediate lipoprotein clearance through the uptake of chylomicrons, VLDLs, and HDLs by hepatocytes. APOE is also involved in the biosynthesis by the liver of VLDLs as well as their uptake by peripheral tissues ensuring the delivery of triglycerides and energy storage in muscle, heart and adipose tissues. By participating in the lipoprotein-mediated distribution of lipids among tissues, APOE plays a critical role in plasma and tissues lipid homeostasis. APOE is also involved in two steps of reverse cholesterol transport, the HDLs-mediated transport of cholesterol from peripheral tissues to the liver, and thereby plays an important role in cholesterol homeostasis. First, it is functionally associated with ABCA1 in the biogenesis of HDLs in tissues. Second, it is enriched in circulating HDLs and mediates their uptake by hepatocytes. APOE also plays an important role in lipid transport in the central nervous system, regulating neuron survival and sprouting. This is Apolipoprotein E (Apoe) from Onychomys torridus (Southern grasshopper mouse).